The sequence spans 183 residues: Threonylcarbamoyl-AMP synthase (183 aa).

In terms of domain architecture, YrdC-like spans 1–183; sequence MNREQIAEAL…LRTNQLFRQG (183 aa).

The protein belongs to the SUA5 family. TsaC subfamily.

The protein localises to the cytoplasm. The catalysed reaction is L-threonine + hydrogencarbonate + ATP = L-threonylcarbamoyladenylate + diphosphate + H2O. Required for the formation of a threonylcarbamoyl group on adenosine at position 37 (t(6)A37) in tRNAs that read codons beginning with adenine. Catalyzes the conversion of L-threonine, HCO(3)(-)/CO(2) and ATP to give threonylcarbamoyl-AMP (TC-AMP) as the acyladenylate intermediate, with the release of diphosphate. The sequence is that of Threonylcarbamoyl-AMP synthase from Haemophilus influenzae (strain 86-028NP).